Reading from the N-terminus, the 345-residue chain is RING finger protein 228 (345 aa).

The span at 1-21 (MAAPASDSGGSQQSPSSSPGS) shows a compositional bias: low complexity. The disordered stretch occupies residues 1–43 (MAAPASDSGGSQQSPSSSPGSREGAGVAAKGAPDCGDAGARDA). Residues 58-125 (CKICYNYFDA…PGAIACPVCR (68 aa)) form an RING-type zinc finger. Residues 159–213 (LPQDRLPPLPARLPAPAAAPPPTPAPPPPPSPAPPQPPPPPPAEDAAPGPRARPG) form a disordered region. The segment covering 163–201 (RLPPLPARLPAPAAAPPPTPAPPPPPSPAPPQPPPPPPA) has biased composition (pro residues). Residues 202-213 (EDAAPGPRARPG) show a composition bias toward low complexity. The next 2 helical transmembrane spans lie at 236-256 (VCVV…LIFV) and 290-310 (LSVA…ICWL). Positions 319 to 345 (AGSTGGSGGGGGPRARAAAGGARRSDT) are disordered. Positions 321-331 (STGGSGGGGGP) are enriched in gly residues. The span at 332–345 (RARAAAGGARRSDT) shows a compositional bias: low complexity.

The protein resides in the membrane. This Homo sapiens (Human) protein is RING finger protein 228.